A 168-amino-acid chain; its full sequence is Endoribonuclease YbeY (168 aa).

3 residues coordinate Zn(2+): H132, H136, and H142.

It belongs to the endoribonuclease YbeY family. Requires Zn(2+) as cofactor.

The protein resides in the cytoplasm. Its function is as follows. Single strand-specific metallo-endoribonuclease involved in late-stage 70S ribosome quality control and in maturation of the 3' terminus of the 16S rRNA. This Clostridium perfringens (strain ATCC 13124 / DSM 756 / JCM 1290 / NCIMB 6125 / NCTC 8237 / Type A) protein is Endoribonuclease YbeY.